Consider the following 158-residue polypeptide: Ribonuclease H (158 aa).

The RNase H type-1 domain maps to Ala9 to Gln155. Residues Asp18, Glu58, Asp80, and Asp147 each coordinate Mg(2+).

Belongs to the RNase H family. Monomer. It depends on Mg(2+) as a cofactor.

The protein localises to the cytoplasm. The enzyme catalyses Endonucleolytic cleavage to 5'-phosphomonoester.. In terms of biological role, endonuclease that specifically degrades the RNA of RNA-DNA hybrids. In Rhodopirellula baltica (strain DSM 10527 / NCIMB 13988 / SH1), this protein is Ribonuclease H.